A 354-amino-acid chain; its full sequence is Ornithine cyclodeaminase (354 aa).

The L-ornithine site is built by arginine 53 and lysine 77. Residues threonine 92, arginine 120, 147–148 (AQ), aspartate 169, threonine 209, 232–235 (VGGD), lysine 239, and serine 300 contribute to the NAD(+) site. Residue arginine 120 participates in L-ornithine binding. Aspartate 235 lines the L-ornithine pocket. Aspartate 235 functions as the Proton donor/acceptor in the catalytic mechanism. L-ornithine is bound at residue valine 301.

It belongs to the ornithine cyclodeaminase/mu-crystallin family. The cofactor is NAD(+).

It carries out the reaction L-ornithine = L-proline + NH4(+). It functions in the pathway amino-acid biosynthesis; L-proline biosynthesis; L-proline from L-ornithine: step 1/1. With respect to regulation, is subject to substrate inhibition. Is regulated by L-arginine, which stimulates enzymatic activity at 0.1-1 mM while inhibits activity at higher concentrations, and has pronounced effects on the optima for pH and temperature and on the Km for L-ornithine. Is not inhibited by L-proline. Its function is as follows. Catalyzes the conversion of L-ornithine into L-proline with release of ammonia. Is involved in the utilization of nopaline, a catabolic pathway that proceeds through L-arginine and L-ornithine to L-proline. Nopaline is a predominant opine in plant cells transformed with Ti plasmid pTiC58. The protein is Ornithine cyclodeaminase of Agrobacterium fabrum (strain C58 / ATCC 33970) (Agrobacterium tumefaciens (strain C58)).